Here is a 609-residue protein sequence, read N- to C-terminus: UvrABC system protein C (609 aa).

The 79-residue stretch at 16–94 folds into the GIY-YIG domain; the sequence is SSAGVYRMYD…IKQYMPKYNV (79 aa). Residues 203–238 form the UVR domain; sequence QQVISALVDKMELAAERQAYEQAARFRDQIMALRKV.

This sequence belongs to the UvrC family. As to quaternary structure, interacts with UvrB in an incision complex.

The protein resides in the cytoplasm. Functionally, the UvrABC repair system catalyzes the recognition and processing of DNA lesions. UvrC both incises the 5' and 3' sides of the lesion. The N-terminal half is responsible for the 3' incision and the C-terminal half is responsible for the 5' incision. The polypeptide is UvrABC system protein C (Shewanella baltica (strain OS195)).